Here is a 116-residue protein sequence, read N- to C-terminus: MDKKTSRLRRATRARKKIQELGVNRLVVHRTPRHTYAQVIDANAQVVAAASTAEKAVSEQLKYTGNVEAAKAVGKTIAERAIEKGVTVVAFDRSGFKYHGRVAALADAAREAGLQF.

The protein belongs to the universal ribosomal protein uL18 family. Part of the 50S ribosomal subunit; part of the 5S rRNA/L5/L18/L25 subcomplex. Contacts the 5S and 23S rRNAs.

Its function is as follows. This is one of the proteins that bind and probably mediate the attachment of the 5S RNA into the large ribosomal subunit, where it forms part of the central protuberance. This is Large ribosomal subunit protein uL18 from Shewanella loihica (strain ATCC BAA-1088 / PV-4).